Consider the following 40-residue polypeptide: Fibrinolytic protease (40 aa).

The region spanning 1–40 is the Peptidase S1 domain; the sequence is IVGGNEVTPHAYPWQVGLFIDDMYFCGGSISVTLTGWGKP.

It belongs to the peptidase S1 family.

Its subcellular location is the secreted. It localises to the extracellular space. Functionally, serine protease with fibrinolytic activity. This chain is Fibrinolytic protease, found in Euphausia superba (Antarctic krill).